The primary structure comprises 183 residues: ATP-dependent protease subunit HslV (183 aa).

The active site involves T13. G168, C171, and T174 together coordinate Na(+).

Belongs to the peptidase T1B family. HslV subfamily. As to quaternary structure, a double ring-shaped homohexamer of HslV is capped on each side by a ring-shaped HslU homohexamer. The assembly of the HslU/HslV complex is dependent on binding of ATP.

The protein resides in the cytoplasm. The catalysed reaction is ATP-dependent cleavage of peptide bonds with broad specificity.. With respect to regulation, allosterically activated by HslU binding. Its function is as follows. Protease subunit of a proteasome-like degradation complex believed to be a general protein degrading machinery. The sequence is that of ATP-dependent protease subunit HslV from Xanthomonas oryzae pv. oryzae (strain MAFF 311018).